The primary structure comprises 177 residues: Nucleoside triphosphate/diphosphate phosphatase (177 aa).

The Proton donor role is filled by Arg-23. Mg(2+)-binding residues include Asn-87, Asp-103, Asp-105, Asp-107, Asp-120, and Glu-123.

It belongs to the Ntdp family. The cofactor is Mg(2+).

It catalyses the reaction a ribonucleoside 5'-triphosphate + H2O = a ribonucleoside 5'-diphosphate + phosphate + H(+). The enzyme catalyses a ribonucleoside 5'-diphosphate + H2O = a ribonucleoside 5'-phosphate + phosphate + H(+). Its function is as follows. Has nucleoside phosphatase activity towards nucleoside triphosphates and nucleoside diphosphates. In Streptococcus equi subsp. zooepidemicus (strain MGCS10565), this protein is Nucleoside triphosphate/diphosphate phosphatase.